A 337-amino-acid chain; its full sequence is Glyceraldehyde-3-phosphate dehydrogenase (337 aa).

Residues 13–14 (RI), aspartate 35, and lysine 80 each bind NAD(+). Residues 151-153 (SCT), threonine 182, 211-212 (TG), and arginine 234 contribute to the D-glyceraldehyde 3-phosphate site. Cysteine 152 acts as the Nucleophile in catalysis. NAD(+) is bound at residue asparagine 316.

The protein belongs to the glyceraldehyde-3-phosphate dehydrogenase family. Homotetramer.

It is found in the cytoplasm. It carries out the reaction D-glyceraldehyde 3-phosphate + phosphate + NAD(+) = (2R)-3-phospho-glyceroyl phosphate + NADH + H(+). It participates in carbohydrate degradation; glycolysis; pyruvate from D-glyceraldehyde 3-phosphate: step 1/5. This chain is Glyceraldehyde-3-phosphate dehydrogenase (GAPD), found in Mycosarcoma maydis (Corn smut fungus).